Reading from the N-terminus, the 218-residue chain is Ribose-5-phosphate isomerase A (218 aa).

Residues 28-31 (TGST), 81-84 (DGAD), and 94-97 (KGGG) each bind substrate. The Proton acceptor role is filled by glutamate 103. Position 121 (lysine 121) interacts with substrate.

It belongs to the ribose 5-phosphate isomerase family. As to quaternary structure, homodimer.

The catalysed reaction is aldehydo-D-ribose 5-phosphate = D-ribulose 5-phosphate. It functions in the pathway carbohydrate degradation; pentose phosphate pathway; D-ribose 5-phosphate from D-ribulose 5-phosphate (non-oxidative stage): step 1/1. Catalyzes the reversible conversion of ribose-5-phosphate to ribulose 5-phosphate. This is Ribose-5-phosphate isomerase A from Psychromonas ingrahamii (strain DSM 17664 / CCUG 51855 / 37).